Here is a 94-residue protein sequence, read N- to C-terminus: Cell division protein FtsB (94 aa).

Residues 1-3 (MRV) lie on the Cytoplasmic side of the membrane. The chain crosses the membrane as a helical span at residues 4 to 21 (FALTLSLLLVWLLYTLMW). The Periplasmic portion of the chain corresponds to 22–94 (GKNGVMDFRA…YRIIGEESRQ (73 aa)). Residues 33 to 76 (QAEIEVQQQVNANLHLRNQEMFAEIDDLRQGLDAIEERARNELG) are a coiled coil.

The protein belongs to the FtsB family. As to quaternary structure, part of a complex composed of FtsB, FtsL and FtsQ.

Its subcellular location is the cell inner membrane. Functionally, essential cell division protein. May link together the upstream cell division proteins, which are predominantly cytoplasmic, with the downstream cell division proteins, which are predominantly periplasmic. This is Cell division protein FtsB from Vibrio cholerae serotype O1 (strain ATCC 39315 / El Tor Inaba N16961).